The sequence spans 293 residues: MTDTTRSLRDCLAPAKLNLFLHITGRRPDGYHALQSVFQLLDWGDRLHFTLRDDGKVSRVTDVPGVPEESDLVVRAASLLKAHAGATLGVDIEIDKRLPMGAGLGGGSSDAATTLLALNRLWRLDLPRTTLQSLAVKLGADVPFFVFGKNAFAEGIGEALQAVELPARWFLVVTPRVHVPTAAIFSEKSLTRDSKPITITDFLAQRGIDAGWPDSFGRNDMQPVVTSKYAEVAKVVEWFYNLTPARMTGSGASVFAAFKSKADAEAAQAKLPAGWNSAVAESMSEHPLFAFAS.

The active site involves Lys-16. Residue 99–109 (PMGAGLGGGSS) coordinates ATP. Residue Asp-141 is part of the active site.

This sequence belongs to the GHMP kinase family. IspE subfamily.

The enzyme catalyses 4-CDP-2-C-methyl-D-erythritol + ATP = 4-CDP-2-C-methyl-D-erythritol 2-phosphate + ADP + H(+). It participates in isoprenoid biosynthesis; isopentenyl diphosphate biosynthesis via DXP pathway; isopentenyl diphosphate from 1-deoxy-D-xylulose 5-phosphate: step 3/6. In terms of biological role, catalyzes the phosphorylation of the position 2 hydroxy group of 4-diphosphocytidyl-2C-methyl-D-erythritol. The sequence is that of 4-diphosphocytidyl-2-C-methyl-D-erythritol kinase from Burkholderia mallei (strain NCTC 10247).